The chain runs to 415 residues: Gamma-glutamyl phosphate reductase (415 aa).

The protein belongs to the gamma-glutamyl phosphate reductase family.

It is found in the cytoplasm. It carries out the reaction L-glutamate 5-semialdehyde + phosphate + NADP(+) = L-glutamyl 5-phosphate + NADPH + H(+). The protein operates within amino-acid biosynthesis; L-proline biosynthesis; L-glutamate 5-semialdehyde from L-glutamate: step 2/2. Catalyzes the NADPH-dependent reduction of L-glutamate 5-phosphate into L-glutamate 5-semialdehyde and phosphate. The product spontaneously undergoes cyclization to form 1-pyrroline-5-carboxylate. The polypeptide is Gamma-glutamyl phosphate reductase (Ligilactobacillus salivarius (strain UCC118) (Lactobacillus salivarius)).